A 546-amino-acid chain; its full sequence is Thermolysin (546 aa).

An N-terminal signal peptide occupies residues 1–25; that stretch reads MNKRAMLGAIGLAFGLMAWPFGASA. A propeptide spans 26–228 (activation peptide); sequence KEKSMVWNEQ…EAKPGGGQPV (203 aa). Positions 287, 289, 291, and 368 each coordinate Ca(2+). Residue histidine 372 coordinates Zn(2+). Glutamate 373 is an active-site residue. The Zn(2+) site is built by histidine 376 and glutamate 396. 9 residues coordinate Ca(2+): glutamate 407, asparagine 413, aspartate 415, glutamate 417, glutamate 420, tyrosine 423, threonine 424, isoleucine 427, and aspartate 430. Catalysis depends on histidine 461, which acts as the Proton donor.

It belongs to the peptidase M4 family. Ca(2+) is required as a cofactor. It depends on Zn(2+) as a cofactor.

The protein localises to the secreted. The catalysed reaction is Preferential cleavage: Xaa-|-Leu &gt; Xaa-|-Phe.. In terms of biological role, extracellular zinc metalloprotease. The chain is Thermolysin from Alicyclobacillus acidocaldarius subsp. acidocaldarius (Bacillus acidocaldarius).